We begin with the raw amino-acid sequence, 367 residues long: Apolipoprotein A-V (367 aa).

The signal sequence occupies residues 1–20 (MVAVLTWALALLSAFATAQT). Phosphoserine is present on Ser56.

This sequence belongs to the apolipoprotein A1/A4/E family. As to quaternary structure, interacts with GPIHBP1. Interacts with SORL1; this interaction leads to APOA5 internalization and sorting either to lysosomes and degradation, or to the trans-Golgi network. Phosphorylated by FAM20C in the extracellular medium.

It localises to the secreted. It is found in the early endosome. Its subcellular location is the late endosome. The protein resides in the golgi apparatus. The protein localises to the trans-Golgi network. Functionally, minor apolipoprotein mainly associated with HDL and to a lesser extent with VLDL. May also be associated with chylomicrons. Important determinant of plasma triglyceride (TG) levels by both being a potent stimulator of apo-CII lipoprotein lipase (LPL) TG hydrolysis and an inhibitor of the hepatic VLDL-TG production rate (without affecting the VLDL-apoB production rate). Activates poorly lecithin:cholesterol acyltransferase (LCAT) and does not enhance efflux of cholesterol from macrophages. Binds heparin. The polypeptide is Apolipoprotein A-V (APOA5) (Phoca vitulina (Harbor seal)).